Consider the following 151-residue polypeptide: UPF0756 membrane protein Lreu_0946 (151 aa).

4 helical membrane passes run 4-24, 52-72, 77-97, and 115-135; these read WLFLALVLLIAIFGHNSSLII, WGVTVISVAILIPIATGQIGF, AAFKTPAGWIAVGMGIAVAIL, and LVLGTIIGVVAFKGIAAGPVI.

This sequence belongs to the UPF0756 family.

It localises to the cell membrane. The chain is UPF0756 membrane protein Lreu_0946 from Limosilactobacillus reuteri (strain DSM 20016) (Lactobacillus reuteri).